The following is a 182-amino-acid chain: Flavin prenyltransferase UbiX (182 aa).

FMN-binding positions include 9–11 (GAS), serine 35, 86–89 (SIKT), and arginine 121. Dimethylallyl phosphate is bound by residues tyrosine 151 and arginine 167.

This sequence belongs to the UbiX/PAD1 family.

It catalyses the reaction dimethylallyl phosphate + FMNH2 = prenylated FMNH2 + phosphate. Functionally, flavin prenyltransferase that catalyzes the synthesis of the prenylated FMN cofactor (prenyl-FMN) for 4-hydroxy-3-polyprenylbenzoic acid decarboxylase UbiD. The prenyltransferase is metal-independent and links a dimethylallyl moiety from dimethylallyl monophosphate (DMAP) to the flavin N5 and C6 atoms of FMN. The polypeptide is Flavin prenyltransferase UbiX (Archaeoglobus fulgidus (strain ATCC 49558 / DSM 4304 / JCM 9628 / NBRC 100126 / VC-16)).